A 365-amino-acid polypeptide reads, in one-letter code: MQIVYLFSSVLLTAALAHENGKVAYPFRLFNGTSSVEEISQQDQMDAPKIMPHVNATTFEWWYFDAVSTTSQNESLTVMFENMGPEGLGAPYPGGPLAVQISGSFSNGTAFTIITAATKGAVLEWGGGGVRGEWRGAGSSFAGKDHREYTVSIANPGIGVYGTMTLRSVSPPRYPCDVKERRASEQLIPNMYLANSQPDAIVEVDFNINESTLKFSGIGYHDLSWGSAPLESSVHSWYWGHGRLGRYSLVWFDVMGRDGKEYFSAWITEAGNVILCGCEPDSVLVRPWGENSGFPPGRGTPAPSGYSLRYDLGQNQIFIANFTREVNIIDNDFTKHIIGLFSGGFEGGEQYEGRAMADQFQFGDL.

The protein belongs to the quinolone epoxide rearrangement protein penF family.

The enzyme catalyses (1'E,3'E)-5-(3,3-dimethyloxiran-2-yl)-3-methylhexa-1,3-dienyl-quinolinone B = aspoquinolone A. The catalysed reaction is (1'E,3'E)-5-(3,3-dimethyloxiran-2-yl)-3-methylhexa-1,3-dienyl-quinolinone B = aspoquinolone B. The protein operates within secondary metabolite biosynthesis. It functions in the pathway alkaloid biosynthesis. Its pathway is mycotoxin biosynthesis. Quinolone epoxide rearrangement protein; part of the gene cluster that mediates the biosynthesis of the aspoquinolone mycotoxins. Within the pathway, asqO catalyzes an enzymatic 3-exo-tet cyclization to yield the cyclopropyl-THF ring system in aspoquinolone. The first step of the pathway is catalyzed by the nonribosomal peptide synthetase asqK that condenses anthranilic acid and O-methyl-L-tyrosine to produce 4'-methoxycyclopeptin. 4'-methoxycyclopeptin is then converted to 4'-methoxydehydrocyclopeptin by the ketoglutarate-dependent dioxygenase asqJ. AsqJ also converts its first product 4'-methoxydehydrocyclopeptin to 4'-methoxycyclopenin. The following conversion of 4'-methoxycyclopenin into 4'-methoxyviridicatin is catalyzed by the cyclopenase asqI. 4'-methoxyviridicatin is the precursor of quinolone natural products, and is further converted to quinolinone B. The prenyltransferase asqH1 then catalyzes the canonical Friedel-Crafts alkylation of quinolinone B with dimethylallyl cation to yield dimethylallyl quinolone, which is subjected to FAD-dependent dehydrogenation by the FAD-linked oxidoreductase asqF to yield conjugated aryl diene. The delta(3') double bond then serves as the site of the second alkylation with DMAPP catalyzed by the prenyltransferase asqH2 to yield a carbenium ion intermediate, which can be attacked by H(2)O to yield a styrenyl quinolone containing a C3'-hydroxyprenyl chain. The FAD-dependent monooxygenase asqG performs epoxidation of the terminal C7'-C8' olefin. Finally, after dehydratation of the epoxide at C3 by asqC, the quinolone epoxide rearrangement protein asqO catalyzes an enzymatic 3-exo-tet cyclization to yield the cyclopropyl-THF ring system in aspoquinolone. This is Quinolone epoxide rearrangement protein asqO from Emericella nidulans (strain FGSC A4 / ATCC 38163 / CBS 112.46 / NRRL 194 / M139) (Aspergillus nidulans).